A 440-amino-acid polypeptide reads, in one-letter code: MRSLKLLLCWISFLTLSISISASSDDQFTLDGTVLELTDSNFDSAISTFDCIFVDFYAPWCGHCKRLNPELDAAAPILAKLKQPIVIAKLNADKYSRLARKIEIDAFPTLMLYNHGVPMEYYGPRKADLLVRYLKKFVAPDVAVLESDSTVKEFVEDAGTFFPVFIGFGLNESIISGLGRKYKKKAWFAVSKEVSEDTMVSYDFDKAPALVANHPTYNEHSVFYGPFEDGFLEEFVKQSFLPLILPINHDTLKLLKDDERKIVLTIVEDETHESLEKLYKALRAAAHANRDLVFGYVGVKQFEEFVDSFHVDKKTNLPKIVVWDGDEEYDQVTGIETITQEEDHLTQVSRFLEGYREGRTEKKKINGPSFMGFINSMIGIRSVYILVFLVAVIMMLRSLGQVEEPTGVRTATAVRERVDQATTVPEDESSEHKPSDKKED.

A signal peptide spans 1–23 (MRSLKLLLCWISFLTLSISISAS). A Thioredoxin domain is found at 24-139 (SDDQFTLDGT…LVRYLKKFVA (116 aa)). Catalysis depends on nucleophile residues Cys61 and Cys64. An intrachain disulfide couples Cys61 to Cys64. A Phosphothreonine modification is found at Thr160. Asn171 carries N-linked (GlcNAc...) asparagine glycosylation. The chain crosses the membrane as a helical span at residues 376–396 (SMIGIRSVYILVFLVAVIMML). The disordered stretch occupies residues 406 to 440 (TGVRTATAVRERVDQATTVPEDESSEHKPSDKKED). The span at 430–440 (SEHKPSDKKED) shows a compositional bias: basic and acidic residues.

Belongs to the protein disulfide isomerase family. In terms of tissue distribution, widely expressed.

Its subcellular location is the membrane. In terms of biological role, acts as a protein-folding catalyst that interacts with nascent polypeptides to catalyze the formation, isomerization, and reduction or oxidation of disulfide bonds. This is Protein disulfide-isomerase 5-2 (PDIL5-2) from Arabidopsis thaliana (Mouse-ear cress).